Consider the following 355-residue polypeptide: SH3 domain-containing protein Dlish (355 aa).

3 SH3 domains span residues 57-117, 183-243, and 287-352; these read SPDS…PCNT, EPSG…PADS, and YHGT…PPAM.

As to quaternary structure, interacts with dachs (via C-terminus); the interaction is direct. Interacts (via N-terminus including SH3 domain 1) with palmitoyltransferase app; this leads to palmitoylation of Dlish by app. Also interacts with dco, ft, ft-regulated E3 ubiquitin ligase Fbxl7, F-box protein slmb and SCF E3 ubiquitin-protein ligase complex component Cul1. Post-translationally, palmitoylated by app.

It is found in the cytoplasm. It localises to the cell cortex. Required for the apical cell cortex localization, total cellular level and full activity of dachs. The polypeptide is SH3 domain-containing protein Dlish (Drosophila melanogaster (Fruit fly)).